The following is a 526-amino-acid chain: MLHSLPIRRALISVSDKGGLVPFARFLADHDIEILSTGGSAKALADAGIPVTEVADFTGFPEMLDGRVKTLHPKIHGGILGIRDNPEHQRAMAAHEILPIDLVVVNLYPFEATVAKGAAFEDCVENIDIGGPALIRAAAKNHEAVTVVVDPEDYQPVMDAMTAEGGATTLELRRKLASAAFARCGAYDGAISRWFQGQVGDETPRHIVFAGRLRQTLRYGENPHQKAAFYGHGIARPGVASAEQLQGKELSYNNINDTDAAFDLVCEFAEPAVAIIKHANPCGVAQGASVVEAYKAALACDPVSAFGGIVALNRPIDRDSAVEITKIFTEVVIAPDADAEARAIFAAKKNLRLLLTGVVADTTAPGLTVRSVAGGMLVQDRDAADLLSADLKVVSKRTPTERELADMLIAFKVCKHVKSNAIVYVKDGATVGIGAGQMSRVDSARIASWKADEAAEAAGLAQSPTQGSVVASDAFFPFADGLLAAAKAGATAVIQPGGSMRDDEVIKAADEAGLAMVFTGLRHFRH.

Residues 1–149 (MLHSLPIRRA…KNHEAVTVVV (149 aa)) enclose the MGS-like domain.

The protein belongs to the PurH family.

It catalyses the reaction (6R)-10-formyltetrahydrofolate + 5-amino-1-(5-phospho-beta-D-ribosyl)imidazole-4-carboxamide = 5-formamido-1-(5-phospho-D-ribosyl)imidazole-4-carboxamide + (6S)-5,6,7,8-tetrahydrofolate. It carries out the reaction IMP + H2O = 5-formamido-1-(5-phospho-D-ribosyl)imidazole-4-carboxamide. It functions in the pathway purine metabolism; IMP biosynthesis via de novo pathway; 5-formamido-1-(5-phospho-D-ribosyl)imidazole-4-carboxamide from 5-amino-1-(5-phospho-D-ribosyl)imidazole-4-carboxamide (10-formyl THF route): step 1/1. Its pathway is purine metabolism; IMP biosynthesis via de novo pathway; IMP from 5-formamido-1-(5-phospho-D-ribosyl)imidazole-4-carboxamide: step 1/1. This is Bifunctional purine biosynthesis protein PurH from Rhodospirillum rubrum (strain ATCC 11170 / ATH 1.1.1 / DSM 467 / LMG 4362 / NCIMB 8255 / S1).